The chain runs to 267 residues: Phosphonates import ATP-binding protein PhnC 1 (267 aa).

Residues leucine 3–glutamine 247 enclose the ABC transporter domain. Glycine 36–threonine 43 contributes to the ATP binding site.

It belongs to the ABC transporter superfamily. Phosphonates importer (TC 3.A.1.9.1) family. In terms of assembly, the complex is composed of two ATP-binding proteins (PhnC), two transmembrane proteins (PhnE) and a solute-binding protein (PhnD).

It localises to the cell inner membrane. It carries out the reaction phosphonate(out) + ATP + H2O = phosphonate(in) + ADP + phosphate + H(+). In terms of biological role, part of the ABC transporter complex PhnCDE involved in phosphonates import. Responsible for energy coupling to the transport system. This Pseudomonas aeruginosa (strain ATCC 15692 / DSM 22644 / CIP 104116 / JCM 14847 / LMG 12228 / 1C / PRS 101 / PAO1) protein is Phosphonates import ATP-binding protein PhnC 1.